The chain runs to 157 residues: Transcription elongation factor GreA (157 aa).

This sequence belongs to the GreA/GreB family.

Its function is as follows. Necessary for efficient RNA polymerase transcription elongation past template-encoded arresting sites. The arresting sites in DNA have the property of trapping a certain fraction of elongating RNA polymerases that pass through, resulting in locked ternary complexes. Cleavage of the nascent transcript by cleavage factors such as GreA or GreB allows the resumption of elongation from the new 3'terminus. GreA releases sequences of 2 to 3 nucleotides. This chain is Transcription elongation factor GreA, found in Hyphomonas neptunium (strain ATCC 15444).